The following is a 195-amino-acid chain: Obelin (195 aa).

The propeptide occupies 1 to 6; that stretch reads MASKYA. 4 EF-hand domains span residues 17 to 52, 53 to 88, 110 to 145, and 146 to 181; these read KWIK…DICK, NLGA…FPEF, LIRE…SGIS, and PSEE…FWYT. Positions 30, 32, 34, 36, and 41 each coordinate Ca(2+). Residues Asp123, Asp125, Ser127, Thr129, Glu134, Asp159, Asp161, Ser163, Glu165, and Glu170 each contribute to the Ca(2+) site.

Belongs to the aequorin family.

Functionally, ca(2+)-dependent bioluminescence photoprotein. Displays an emission peak at 495 nm (blue light). Trace amounts of calcium ion trigger the intramolecular oxidation of the chromophore, coelenterazine into coelenteramide and CO(2) with the concomitant emission of light. The chain is Obelin from Obelia geniculata (Knotted thread hydroid).